Here is a 967-residue protein sequence, read N- to C-terminus: Glutamate receptor 2.6 (967 aa).

A signal peptide spans 1-31; it reads MSLFNHLLSRALPLWLLFFINFLVLLGKSQQ. Over 32 to 590 the chain is Extracellular; that stretch reads EVLQVQVGIV…WVFLKPLTRE (559 aa). 7 N-linked (GlcNAc...) asparagine glycosylation sites follow: asparagine 45, asparagine 57, asparagine 121, asparagine 336, asparagine 345, asparagine 424, and asparagine 550. A helical transmembrane segment spans residues 591–611; the sequence is LWFLTAASFLYIGIMVWIFEY. Topologically, residues 612–621 are cytoplasmic; sequence QASGDFRKQS. The chain crosses the membrane as a helical span at residues 622-642; sequence IINKISNVFYFSFSTLFFAHM. Over 643–651 the chain is Cytoplasmic; sequence RPSESIFTR. Residues 652 to 672 form a helical membrane-spanning segment; it reads VLVVVWCFVLLILTQSYTATL. The Extracellular portion of the chain corresponds to 673–832; sequence TSMLTVQELR…DSPIRLDHHS (160 aa). Asparagine 795 carries an N-linked (GlcNAc...) asparagine glycan. A helical transmembrane segment spans residues 833–853; sequence FEALFTIVFVVSMLLLLAMLV. Residues 854-967 are Cytoplasmic-facing; sequence CRRYRQESKS…AALFSRIKSA (114 aa). The span at 864–874 shows a compositional bias: polar residues; sequence GEINANNSPTD. Residues 864–913 are disordered; the sequence is GEINANNSPTDGNMRAPPNQPTDDNMRAPTSPPIDDQVLEPPGPALNEAD.

The protein belongs to the glutamate-gated ion channel (TC 1.A.10.1) family. In terms of assembly, may form heteromers. Expressed predominantly in roots.

It localises to the membrane. Glutamate-gated receptor that probably acts as a non-selective cation channel. May be involved in light-signal transduction and calcium homeostasis via the regulation of calcium influx into cells. In Arabidopsis thaliana (Mouse-ear cress), this protein is Glutamate receptor 2.6 (GLR2.6).